The following is a 331-amino-acid chain: MATTPPPADAPRHVPVLRDRCVNLLAPAIEAANLAGRRAVVVDATLGMGGHSEAMLTRFENLHLIGIDRDTQALDLSGARLKPFEDRTDLVHAVYDEITEVLDDLGFESIDGVLMDLGVSSLQLDEAERGFAYSYDAPLDMRMDTSRGQSAADVVNSYSETELVSIIRRWGEEKFAGRIANRIVAARAEKPFAGTGELVEVIRKAVPAAAARTGGHPAKRTFQALRIEVNEELVVLERAVPAAVDALAIGGRAVVMSYHSLEDKIVKKFFSTGVTSSAPPGFPVELDSQKPELKTLTKGTEVPTEAEIAENPRAASARLRAVERIRPRRTS.

S-adenosyl-L-methionine-binding positions include 49-51 (GGH), Asp68, Leu102, Asp116, and Gln123.

Belongs to the methyltransferase superfamily. RsmH family.

It is found in the cytoplasm. The catalysed reaction is cytidine(1402) in 16S rRNA + S-adenosyl-L-methionine = N(4)-methylcytidine(1402) in 16S rRNA + S-adenosyl-L-homocysteine + H(+). Specifically methylates the N4 position of cytidine in position 1402 (C1402) of 16S rRNA. This chain is Ribosomal RNA small subunit methyltransferase H, found in Renibacterium salmoninarum (strain ATCC 33209 / DSM 20767 / JCM 11484 / NBRC 15589 / NCIMB 2235).